Here is a 189-residue protein sequence, read N- to C-terminus: Crossover junction endodeoxyribonuclease RuvC (189 aa).

Residues aspartate 11, glutamate 71, and aspartate 143 contribute to the active site. Mg(2+) contacts are provided by aspartate 11, glutamate 71, and aspartate 143.

It belongs to the RuvC family. As to quaternary structure, homodimer which binds Holliday junction (HJ) DNA. The HJ becomes 2-fold symmetrical on binding to RuvC with unstacked arms; it has a different conformation from HJ DNA in complex with RuvA. In the full resolvosome a probable DNA-RuvA(4)-RuvB(12)-RuvC(2) complex forms which resolves the HJ. Requires Mg(2+) as cofactor.

It is found in the cytoplasm. It carries out the reaction Endonucleolytic cleavage at a junction such as a reciprocal single-stranded crossover between two homologous DNA duplexes (Holliday junction).. Functionally, the RuvA-RuvB-RuvC complex processes Holliday junction (HJ) DNA during genetic recombination and DNA repair. Endonuclease that resolves HJ intermediates. Cleaves cruciform DNA by making single-stranded nicks across the HJ at symmetrical positions within the homologous arms, yielding a 5'-phosphate and a 3'-hydroxyl group; requires a central core of homology in the junction. The consensus cleavage sequence is 5'-(A/T)TT(C/G)-3'. Cleavage occurs on the 3'-side of the TT dinucleotide at the point of strand exchange. HJ branch migration catalyzed by RuvA-RuvB allows RuvC to scan DNA until it finds its consensus sequence, where it cleaves and resolves the cruciform DNA. The polypeptide is Crossover junction endodeoxyribonuclease RuvC (Methylorubrum extorquens (strain CM4 / NCIMB 13688) (Methylobacterium extorquens)).